Reading from the N-terminus, the 185-residue chain is Ribosome-recycling factor (185 aa).

Belongs to the RRF family.

It localises to the cytoplasm. Responsible for the release of ribosomes from messenger RNA at the termination of protein biosynthesis. May increase the efficiency of translation by recycling ribosomes from one round of translation to another. This chain is Ribosome-recycling factor, found in Xanthomonas euvesicatoria pv. vesicatoria (strain 85-10) (Xanthomonas campestris pv. vesicatoria).